Here is a 231-residue protein sequence, read N- to C-terminus: Enolase-phosphatase E1 (231 aa).

It belongs to the HAD-like hydrolase superfamily. MasA/MtnC family. In terms of assembly, monomer. It depends on Mg(2+) as a cofactor.

It carries out the reaction 5-methylsulfanyl-2,3-dioxopentyl phosphate + H2O = 1,2-dihydroxy-5-(methylsulfanyl)pent-1-en-3-one + phosphate. It participates in amino-acid biosynthesis; L-methionine biosynthesis via salvage pathway; L-methionine from S-methyl-5-thio-alpha-D-ribose 1-phosphate: step 3/6. The protein operates within amino-acid biosynthesis; L-methionine biosynthesis via salvage pathway; L-methionine from S-methyl-5-thio-alpha-D-ribose 1-phosphate: step 4/6. Functionally, bifunctional enzyme that catalyzes the enolization of 2,3-diketo-5-methylthiopentyl-1-phosphate (DK-MTP-1-P) into the intermediate 2-hydroxy-3-keto-5-methylthiopentenyl-1-phosphate (HK-MTPenyl-1-P), which is then dephosphorylated to form the acireductone 1,2-dihydroxy-3-keto-5-methylthiopentene (DHK-MTPene). In Granulibacter bethesdensis (strain ATCC BAA-1260 / CGDNIH1), this protein is Enolase-phosphatase E1.